Reading from the N-terminus, the 318-residue chain is Vomeronasal type-1 receptor A11 (318 aa).

Topologically, residues 1–32 are extracellular; the sequence is MSEILFFSPQPLFSHMMNKNSRLHTHSNIKNT. A helical membrane pass occupies residues 33–53; that stretch reads FFSEIGIGISGNSFLLLFHIL. Residues 54 to 65 are Cytoplasmic-facing; that stretch reads KFIRGHRPRLTD. A helical membrane pass occupies residues 66 to 86; that stretch reads LPIGLLSLIHLLMLLLMAFIA. Residues 87–101 lie on the Extracellular side of the membrane; it reads TDIFISRRGWDGIIC. Residues cysteine 101 and cysteine 188 are joined by a disulfide bond. A helical membrane pass occupies residues 102 to 118; it reads KFLVYLYGVLRGLSLCT. Residues 119 to 147 are Cytoplasmic-facing; it reads TSMLSVLQAIILSPRSSCLAKLKHKSPHH. The helical transmembrane segment at 148–168 threads the bilayer; the sequence is ISCAIIFLSVLYMLISSHILL. Over 169-206 the chain is Extracellular; the sequence is SITATPNLTMNDFLYVSQSCSLLPLSYLVQSMYSTLLA. A glycan (N-linked (GlcNAc...) asparagine) is linked at asparagine 175. The chain crosses the membrane as a helical span at residues 207 to 227; the sequence is LREVFLISLMVLSTLYMVVLL. The Cytoplasmic portion of the chain corresponds to 228-254; it reads CRHRKQAQHLQGTSLSPKASAEQRATQ. A helical membrane pass occupies residues 255 to 275; that stretch reads TILMLMTFFVLMSIFDSIVSC. The Extracellular portion of the chain corresponds to 276–285; it reads SRTMFLDDPT. A helical membrane pass occupies residues 286–306; that stretch reads SYSIHIFVMHIYATVSPFVFM. Residues 307–318 lie on the Cytoplasmic side of the membrane; that stretch reads STEKHIVNILRG.

The protein belongs to the G-protein coupled receptor 1 family.

The protein localises to the cell membrane. In terms of biological role, putative pheromone receptor implicated in the regulation of social and reproductive behavior. The polypeptide is Vomeronasal type-1 receptor A11 (Mus musculus (Mouse)).